The sequence spans 55 residues: UPF0391 membrane protein Neut_2351/Neut_2360 (55 aa).

2 helical membrane passes run 4–24 (LAVV…TGVA) and 28–48 (AEMA…FWVL).

Belongs to the UPF0391 family.

It localises to the cell membrane. The polypeptide is UPF0391 membrane protein Neut_2351/Neut_2360 (Nitrosomonas eutropha (strain DSM 101675 / C91 / Nm57)).